The primary structure comprises 283 residues: Heavy metal-associated isoprenylated plant protein 3 (283 aa).

The segment covering 1–22 has biased composition (basic and acidic residues); it reads MGEKKNEGDNKKKGGDNKKKNE. Positions 1-26 are disordered; the sequence is MGEKKNEGDNKKKGGDNKKKNETPSI. HMA domains follow at residues 25-88 and 132-195; these read SITV…KKKV and VTTA…KRAV. Zn(2+)-binding residues include cysteine 36 and cysteine 39. The span at 82 to 129 shows a compositional bias: basic and acidic residues; it reads EKTKKKVDLVSPQPKKEKEKENKNKNDEDKKKSEEKKKPDNNDKKPKE. Residues 82–131 are disordered; sequence EKTKKKVDLVSPQPKKEKEKENKNKNDEDKKKSEEKKKPDNNDKKPKETP. Positions 143 and 146 each coordinate Zn(2+). Basic and acidic residues predominate over residues 198–230; sequence VPPKKEKDKENGNENGEKKKGGGGDGGGKEKTG. The segment at 198–238 is disordered; it reads VPPKKEKDKENGNENGEKKKGGGGDGGGKEKTGNKGGGEGV. A Cysteine methyl ester modification is found at cysteine 280. A lipid anchor (S-farnesyl cysteine) is attached at cysteine 280. The propeptide at 281–283 is removed in mature form; the sequence is VVM.

This sequence belongs to the HIPP family.

The protein localises to the nucleus. Its subcellular location is the nucleolus. The protein resides in the cytoplasm. Its function is as follows. Heavy-metal-binding protein. Binds high amounts of zinc. May act as an upstream regulator of the salicylate-dependent pathogen response. Involved in abiotic stress responses, and seed and flower development. This chain is Heavy metal-associated isoprenylated plant protein 3, found in Arabidopsis thaliana (Mouse-ear cress).